Reading from the N-terminus, the 941-residue chain is Bifunctional glutamine synthetase adenylyltransferase/adenylyl-removing enzyme (941 aa).

Residues 1 to 431 form an adenylyl removase region; the sequence is MSSAPPFAAA…TFRNAFRLAG (431 aa). Residues 447-941 are adenylyl transferase; it reads NGHAMRPHAG…DGTIAQAEVK (495 aa).

The protein belongs to the GlnE family. Requires Mg(2+) as cofactor.

The catalysed reaction is [glutamine synthetase]-O(4)-(5'-adenylyl)-L-tyrosine + phosphate = [glutamine synthetase]-L-tyrosine + ADP. It carries out the reaction [glutamine synthetase]-L-tyrosine + ATP = [glutamine synthetase]-O(4)-(5'-adenylyl)-L-tyrosine + diphosphate. Functionally, involved in the regulation of glutamine synthetase GlnA, a key enzyme in the process to assimilate ammonia. When cellular nitrogen levels are high, the C-terminal adenylyl transferase (AT) inactivates GlnA by covalent transfer of an adenylyl group from ATP to specific tyrosine residue of GlnA, thus reducing its activity. Conversely, when nitrogen levels are low, the N-terminal adenylyl removase (AR) activates GlnA by removing the adenylyl group by phosphorolysis, increasing its activity. The regulatory region of GlnE binds the signal transduction protein PII (GlnB) which indicates the nitrogen status of the cell. The sequence is that of Bifunctional glutamine synthetase adenylyltransferase/adenylyl-removing enzyme from Bordetella pertussis (strain Tohama I / ATCC BAA-589 / NCTC 13251).